The primary structure comprises 261 residues: Mite allergen Eur m 3 (261 aa).

A signal peptide spans 1 to 18 (MVICNAIIVLLLAFNTLA). Positions 19 to 29 (NPILPSSPNAT) are excised as a propeptide. Residues 30-260 (IVGGQKAKAG…FIDWIDSKRS (231 aa)) enclose the Peptidase S1 domain. A disulfide bond links cysteine 54 and cysteine 70. Active-site charge relay system residues include histidine 69 and aspartate 114. 2 cysteine pairs are disulfide-bonded: cysteine 181-cysteine 198 and cysteine 210-cysteine 236. Serine 214 serves as the catalytic Charge relay system.

This sequence belongs to the peptidase S1 family.

Its subcellular location is the secreted. The protein is Mite allergen Eur m 3 (EURM3) of Euroglyphus maynei (Mayne's house dust mite).